The primary structure comprises 314 residues: Homoserine O-acetyltransferase (314 aa).

Catalysis depends on C142, which acts as the Acyl-thioester intermediate. 2 residues coordinate substrate: K163 and S192. The active-site Proton acceptor is H235. E237 is an active-site residue. Substrate is bound at residue R249.

The protein belongs to the MetA family.

The protein resides in the cytoplasm. The enzyme catalyses L-homoserine + acetyl-CoA = O-acetyl-L-homoserine + CoA. It functions in the pathway amino-acid biosynthesis; L-methionine biosynthesis via de novo pathway; O-acetyl-L-homoserine from L-homoserine: step 1/1. In terms of biological role, transfers an acetyl group from acetyl-CoA to L-homoserine, forming acetyl-L-homoserine. In Streptococcus pneumoniae serotype 4 (strain ATCC BAA-334 / TIGR4), this protein is Homoserine O-acetyltransferase.